The following is a 100-amino-acid chain: Nucleoid-associated protein Rcas_2292 (100 aa).

This sequence belongs to the YbaB/EbfC family. As to quaternary structure, homodimer.

Its subcellular location is the cytoplasm. The protein resides in the nucleoid. Binds to DNA and alters its conformation. May be involved in regulation of gene expression, nucleoid organization and DNA protection. The sequence is that of Nucleoid-associated protein Rcas_2292 from Roseiflexus castenholzii (strain DSM 13941 / HLO8).